Reading from the N-terminus, the 88-residue chain is Elongation factor 1-beta (88 aa).

This sequence belongs to the EF-1-beta/EF-1-delta family.

Its function is as follows. Promotes the exchange of GDP for GTP in EF-1-alpha/GDP, thus allowing the regeneration of EF-1-alpha/GTP that could then be used to form the ternary complex EF-1-alpha/GTP/AAtRNA. This chain is Elongation factor 1-beta, found in Methanosphaera stadtmanae (strain ATCC 43021 / DSM 3091 / JCM 11832 / MCB-3).